An 88-amino-acid polypeptide reads, in one-letter code: Small ribosomal subunit protein uS17 (88 aa).

It belongs to the universal ribosomal protein uS17 family. In terms of assembly, part of the 30S ribosomal subunit.

One of the primary rRNA binding proteins, it binds specifically to the 5'-end of 16S ribosomal RNA. This is Small ribosomal subunit protein uS17 from Prochlorococcus marinus (strain MIT 9301).